Reading from the N-terminus, the 338-residue chain is 4-hydroxy-2-oxovalerate aldolase (338 aa).

The Pyruvate carboxyltransferase domain maps to 6-256 (IHIVDTTLRD…RTGVDFYKVM (251 aa)). 14–15 (RD) contributes to the substrate binding site. Residue D15 participates in Mn(2+) binding. The Proton acceptor role is filled by H18. The substrate site is built by S168 and H195. Residues H195 and H197 each coordinate Mn(2+). Y286 is a substrate binding site.

It belongs to the 4-hydroxy-2-oxovalerate aldolase family.

It catalyses the reaction (S)-4-hydroxy-2-oxopentanoate = acetaldehyde + pyruvate. This Moorella thermoacetica (strain ATCC 39073 / JCM 9320) protein is 4-hydroxy-2-oxovalerate aldolase.